A 141-amino-acid chain; its full sequence is Translation initiation factor 2 subunit beta (141 aa).

This sequence belongs to the eIF-2-beta/eIF-5 family. In terms of assembly, heterotrimer composed of an alpha, a beta and a gamma chain.

In terms of biological role, eIF-2 functions in the early steps of protein synthesis by forming a ternary complex with GTP and initiator tRNA. This Sulfolobus acidocaldarius (strain ATCC 33909 / DSM 639 / JCM 8929 / NBRC 15157 / NCIMB 11770) protein is Translation initiation factor 2 subunit beta.